A 151-amino-acid polypeptide reads, in one-letter code: MLVYGLYKSPLGYITVAKDDKGFIMLDFCDCVEGNSRDDSSFTEFFHKLDLYFEGKPINLREPINLKTYPFRLSVFKEVMKIPWGKVMPYKQIADSLGTSPRAVGMALSKNPILLIIPCHRVIAENGIGGYSRGVKLKRALLELEGVKIPE.

The active-site Nucleophile; methyl group acceptor is cysteine 119.

The protein belongs to the MGMT family.

It is found in the cytoplasm. It catalyses the reaction a 6-O-methyl-2'-deoxyguanosine in DNA + L-cysteinyl-[protein] = S-methyl-L-cysteinyl-[protein] + a 2'-deoxyguanosine in DNA. The catalysed reaction is a 4-O-methyl-thymidine in DNA + L-cysteinyl-[protein] = a thymidine in DNA + S-methyl-L-cysteinyl-[protein]. Its function is as follows. Involved in the cellular defense against the biological effects of O6-methylguanine (O6-MeG) and O4-methylthymine (O4-MeT) in DNA. Repairs the methylated nucleobase in DNA by stoichiometrically transferring the methyl group to a cysteine residue in the enzyme. This is a suicide reaction: the enzyme is irreversibly inactivated. The chain is Methylated-DNA--protein-cysteine methyltransferase from Saccharolobus islandicus (strain Y.N.15.51 / Yellowstone #2) (Sulfolobus islandicus).